The following is a 540-amino-acid chain: Maintenance of mitochondrial morphology protein 1 (540 aa).

Residues 1–25 (MAGPSNQTQPPPPVLTQPSLSFTQG) are Lumenal-facing. The chain crosses the membrane as a helical span at residues 26–46 (LLVGQLSVVLLIGAFIKFFIF). The Cytoplasmic portion of the chain corresponds to 47–540 (GEAPPHPSRN…GSMPDPVVVT (494 aa)). 4 disordered regions span residues 52 to 135 (HPSR…SHQP), 275 to 331 (GPGT…ATAA), 416 to 471 (GRTG…GGSM), and 509 to 540 (YGGAQGGGGGGGRGGEEQFAIPGSMPDPVVVT). Polar residues-rich tracts occupy residues 69 to 81 (YSLNSISADSSPR), 88 to 105 (STSNILRPVPSSSTNTRS), and 112 to 121 (YSATPTNPTS). Over residues 122–132 (KHSRSRPHHSS) the composition is skewed to basic residues. The 276-residue stretch at 134-409 (QPESLDWFNV…EPRVQVVGLP (276 aa)) folds into the SMP-LTD domain. The span at 321–331 (TNTNTAGATAA) shows a compositional bias: low complexity. Composition is skewed to gly residues over residues 442–471 (TAGGDGVGVRGGGGGGGGGGGVGGSGGGSM) and 511–521 (GAQGGGGGGGR).

This sequence belongs to the MMM1 family. In terms of assembly, homodimer. Component of the ER-mitochondria encounter structure (ERMES) or MDM complex, composed of MMM1, MDM10, MDM12 and MDM34. An MMM1 homodimer associates with one molecule of MDM12 on each side in a pairwise head-to-tail manner, and the SMP-LTD domains of MMM1 and MDM12 generate a continuous hydrophobic tunnel for phospholipid trafficking.

The protein resides in the endoplasmic reticulum membrane. Functionally, component of the ERMES/MDM complex, which serves as a molecular tether to connect the endoplasmic reticulum (ER) and mitochondria. Components of this complex are involved in the control of mitochondrial shape and protein biogenesis, and function in nonvesicular lipid trafficking between the ER and mitochondria. The MDM12-MMM1 subcomplex functions in the major beta-barrel assembly pathway that is responsible for biogenesis of all outer membrane beta-barrel proteins, and acts in a late step after the SAM complex. The MDM10-MDM12-MMM1 subcomplex further acts in the TOM40-specific pathway after the action of the MDM12-MMM1 complex. Essential for establishing and maintaining the structure of mitochondria and maintenance of mtDNA nucleoids. This Blastomyces gilchristii (strain SLH14081) (Blastomyces dermatitidis) protein is Maintenance of mitochondrial morphology protein 1.